Consider the following 71-residue polypeptide: MASLKITQVRSTIGVRWKQRESLRTLGLRRIRHSVIREDNLQTRGLIAVVRHLVEVEPATGGSTPVGGGRD.

The protein belongs to the universal ribosomal protein uL30 family. As to quaternary structure, part of the 50S ribosomal subunit.

This chain is Large ribosomal subunit protein uL30, found in Mycobacterium leprae (strain TN).